A 206-amino-acid polypeptide reads, in one-letter code: HTH-type transcriptional regulator Hpr (206 aa).

Residues A13–G157 enclose the HTH marR-type domain. Residues I63–E86 constitute a DNA-binding region (H-T-H motif). The disordered stretch occupies residues S186–V206.

Homodimer.

In terms of biological role, negative regulator of protease production and sporulation. The polypeptide is HTH-type transcriptional regulator Hpr (Bacillus pumilus (strain SAFR-032)).